Consider the following 194-residue polypeptide: Adenylate kinase (194 aa).

Gly10–Thr15 is an ATP binding site. The segment at Ser30–Val59 is NMP. Residues Thr31, Arg36, Gln57 to Val59, Gly85 to Arg88, and Gln92 each bind AMP. Residues Ser126–Asp142 are LID. Arg127 contacts ATP. Residues Arg139 and Arg150 each contribute to the AMP site. Ala178 provides a ligand contact to ATP.

The protein belongs to the adenylate kinase family. Monomer.

The protein resides in the cytoplasm. It carries out the reaction AMP + ATP = 2 ADP. Its pathway is purine metabolism; AMP biosynthesis via salvage pathway; AMP from ADP: step 1/1. In terms of biological role, catalyzes the reversible transfer of the terminal phosphate group between ATP and AMP. Plays an important role in cellular energy homeostasis and in adenine nucleotide metabolism. The chain is Adenylate kinase from Brucella anthropi (strain ATCC 49188 / DSM 6882 / CCUG 24695 / JCM 21032 / LMG 3331 / NBRC 15819 / NCTC 12168 / Alc 37) (Ochrobactrum anthropi).